A 510-amino-acid polypeptide reads, in one-letter code: Beta-glucosidase 12 (510 aa).

The signal sequence occupies residues 1–24 (MAAAGAMPGGLLLTFLLLAVVASG). A beta-D-glucoside is bound at residue glutamine 53. Asparagine 122 is a glycosylation site (N-linked (GlcNAc...) asparagine). Residues histidine 157 and 202-203 (NE) contribute to the a beta-D-glucoside site. The active-site Proton donor is glutamate 203. 2 cysteine pairs are disulfide-bonded: cysteine 208-cysteine 243 and cysteine 222-cysteine 230. Asparagine 229 carries N-linked (GlcNAc...) asparagine glycosylation. Position 346 (tyrosine 346) interacts with a beta-D-glucoside. N-linked (GlcNAc...) asparagine glycans are attached at residues asparagine 361 and asparagine 371. Residue glutamate 417 participates in a beta-D-glucoside binding. Catalysis depends on glutamate 417, which acts as the Nucleophile. The N-linked (GlcNAc...) asparagine glycan is linked to asparagine 425. Residues tryptophan 466, 473–474 (EW), and phenylalanine 482 contribute to the a beta-D-glucoside site.

Belongs to the glycosyl hydrolase 1 family.

The protein localises to the secreted. The enzyme catalyses Hydrolysis of terminal, non-reducing beta-D-glucosyl residues with release of beta-D-glucose.. Functionally, hydrolyzes p-nitrophenyl beta-D-glucoside, p-nitrophenyl beta-D-galactoside, p-nitrophenyl beta-D-xyloside, p-nitrophenyl beta-D-fucoside, p-nitrophenyl beta-L-arabinoside, cello-oligosaccharides and laminaribiose. In Oryza sativa subsp. indica (Rice), this protein is Beta-glucosidase 12.